The primary structure comprises 233 residues: Methyltransferase srdJ (233 aa).

Positions 1-32 are disordered; the sequence is MFQVQTAGTRTGTSSPDTTTSEAGLGSTPPMP. A compositionally biased stretch (low complexity) spans 9–21; the sequence is TRTGTSSPDTTTS. S-adenosyl-L-methionine contacts are provided by Trp-40, Trp-52, and Gly-81. A Required for methyltransferase activity motif is present at residues 140–146; that stretch reads EISSQKY.

The protein belongs to the methyltransferase superfamily.

In terms of biological role, methyltransferase; part of the gene cluster that mediates the biosynthesis of sordarial, a salicylic aldehyde structurally related to the phytotoxin pyriculol. The most interesting aspect of this pathway is formation of an aromatic product from the highly reducing polyketide synthase srdA. SrdA synthesizes a reduced polyketide chain from one molecule of acetyl-CoA and five molecules of malonyl-CoA. The polyketide chain is then reductively released as an aldehyde. The oxidoreductases srdC, srdD and srdE then oxidize one of the hydroxy groups to facilitate the intramolecular aldol condensation, followed by dehydration to yield a salicylic aldehyde. This aldehyde can undergo facile reduction by endogenous reductases to yield the alcohol 1-hydroxy-2-hydroxymethyl-3-pent-1,3-dienylbenzene. The flavin-dependent srdI counteract against the propensity of the aldehydes to be reduced under physiological conditions and is responsible for reoxidizing 1-hydroxy-2-hydroxymethyl-3-pent-1,3-dienylbenzene back to the salicylic aldehyde. This salicylic aldehyde is then selectively epoxidized by the cupin-domain-containing oxidoreductase srdB to yield the epoxide, which can be hydrolyzed stereoselectively by the hydrolase srdG to give the final product sordarial. The polypeptide is Methyltransferase srdJ (Neurospora crassa (strain ATCC 24698 / 74-OR23-1A / CBS 708.71 / DSM 1257 / FGSC 987)).